The following is a 257-amino-acid chain: GTP cyclohydrolase III (257 aa).

Belongs to the archaeal-type GTP cyclohydrolase family.

The enzyme catalyses GTP + 3 H2O = 2-amino-5-formylamino-6-(5-phospho-D-ribosylamino)pyrimidin-4(3H)-one + 2 phosphate + 2 H(+). Catalyzes the formation of 2-amino-5-formylamino-6-ribofuranosylamino-4(3H)-pyrimidinone ribonucleotide monophosphate and inorganic phosphate from GTP. Also has an independent pyrophosphate phosphohydrolase activity. This chain is GTP cyclohydrolase III, found in Halorubrum lacusprofundi (strain ATCC 49239 / DSM 5036 / JCM 8891 / ACAM 34).